Reading from the N-terminus, the 330-residue chain is Phosphate acyltransferase (330 aa).

The protein belongs to the PlsX family. As to quaternary structure, homodimer. Probably interacts with PlsY.

It localises to the cytoplasm. It catalyses the reaction a fatty acyl-[ACP] + phosphate = an acyl phosphate + holo-[ACP]. The protein operates within lipid metabolism; phospholipid metabolism. Functionally, catalyzes the reversible formation of acyl-phosphate (acyl-PO(4)) from acyl-[acyl-carrier-protein] (acyl-ACP). This enzyme utilizes acyl-ACP as fatty acyl donor, but not acyl-CoA. The chain is Phosphate acyltransferase from Teredinibacter turnerae (strain ATCC 39867 / T7901).